Here is a 379-residue protein sequence, read N- to C-terminus: Pentatricopeptide repeat-containing protein At3g25210, mitochondrial (379 aa).

6 PPR repeats span residues S142–K177, D179–P221, D222–P256, N257–P291, N292–P326, and D327–M361.

It belongs to the PPR family. P subfamily.

The protein localises to the mitochondrion. This is Pentatricopeptide repeat-containing protein At3g25210, mitochondrial from Arabidopsis thaliana (Mouse-ear cress).